Reading from the N-terminus, the 330-residue chain is Putative protein N-methyltransferase FAM86B1 (330 aa).

S-adenosyl-L-methionine contacts are provided by residues W139, 165-167 (GSG), W228, and A247.

The protein belongs to the class I-like SAM-binding methyltransferase superfamily. EEF2KMT family.

This is Putative protein N-methyltransferase FAM86B1 from Homo sapiens (Human).